Consider the following 562-residue polypeptide: Catalase T (562 aa).

Catalysis depends on residues His-64 and Asn-137. Residue Tyr-351 coordinates heme.

The protein belongs to the catalase family. Homotetramer. It depends on heme as a cofactor.

The protein resides in the cytoplasm. It carries out the reaction 2 H2O2 = O2 + 2 H2O. Occurs in almost all aerobically respiring organisms and serves to protect cells from the toxic effects of hydrogen peroxide. This is Catalase T (CTT1) from Saccharomyces cerevisiae (strain ATCC 204508 / S288c) (Baker's yeast).